A 713-amino-acid polypeptide reads, in one-letter code: Pro-neuregulin-3, membrane-bound isoform (713 aa).

The Extracellular portion of the chain corresponds to 1-362; sequence MSEGAAGASP…MESEDVYQRQ (362 aa). Disordered stretches follow at residues 28–48, 119–220, and 251–282; these read AAAA…AAEP, SSFP…STQA, and AAAS…TTYS. The segment covering 34–44 has biased composition (gly residues); the sequence is AGGGPDGGGEG. Residues 127 to 148 show a composition bias toward low complexity; it reads TTTTTTSTTSPATPSAGGAASS. The segment covering 149 to 163 has biased composition (polar residues); sequence RTPNRISTRLTTITR. 2 stretches are compositionally biased toward low complexity: residues 195 to 207 and 254 to 274; these read STTA…STPG and SSSS…STSP. The EGF-like domain maps to 288 to 331; that stretch reads HFKPCRDKDLAYCLNDGECFVIETLTGSHKHCRCKEGYQGVRCD. Intrachain disulfides connect cysteine 292/cysteine 306, cysteine 300/cysteine 319, and cysteine 321/cysteine 330. The helical transmembrane segment at 363 to 383 threads the bilayer; the sequence is VLSISCIIFGIVIVGMFCAAF. The Cytoplasmic segment spans residues 384–713; it reads YFKSKKQAKQ…EIQRDSVLTK (330 aa). Residues 449–496 are disordered; the sequence is SAPQSFPEVTSPDRGSQPIKHHSPGQRSGMLHRNTFRRAPPSPRSRLG.

This sequence belongs to the neuregulin family. In terms of assembly, interacts with ERBB4. Proteolytic cleavage close to the plasma membrane on the external face leads to the release of the soluble growth factor form. In terms of processing, extensive glycosylation precedes the proteolytic cleavage. As to expression, expressed in sympathetic, motor, and sensory neurons.

Its subcellular location is the cell membrane. The protein localises to the secreted. Direct ligand for the ERBB4 tyrosine kinase receptor. Binding results in ligand-stimulated tyrosine phosphorylation and activation of the receptor. Does not bind to the EGF receptor, ERBB2 or ERBB3 receptors. The protein is Pro-neuregulin-3, membrane-bound isoform (Nrg3) of Mus musculus (Mouse).